Here is a 504-residue protein sequence, read N- to C-terminus: METLDAIQLPYLGVVGASLIVILGIILLFPLGSDPFITINQHPRDLFQTKAKQQFEYNAAALLNEGLQTGHSAFRLVTNMVTYLILKDQYAEEIKNDSRFGAHEAVDPVLLVDLPGLESMFQGSLHNQVPPMAVRALNKELVHLTPSLSEEAMNCLQTRWTDSTEWHGVSIPETVLALIAQMTTRALLGPELCRNPEWLDIAKSFTTNRAIAVAAVQSWPSFLQPVIHWFLPPCRALRRQIQCARNIILPALERERRAYCSDQPTKREFSNLVFIDQYAKGARYDATMAQLRIIAVAFQTTSDLVEKVIARLCKHPELIEPLREEVVSVVGNRGLHRHSLRKLTLMESVMKETQRLEPAVIIGMFRLAKEKVTLKDGTVVPKGTNIAFANDLRFDPEMYLEPETFDGYRFQRMREDPAKIDLAPFTKTRMSHLAFGHGKHACPGRFLACDEAKLILCHILLNYDIRAVEGSPPELRARGMFVQLDPGAMMSVRRRRGTETAPHG.

A helical transmembrane segment spans residues 12 to 32 (LGVVGASLIVILGIILLFPLG). Cys-442 is a binding site for heme.

The protein belongs to the cytochrome P450 family. Requires heme as cofactor.

The protein localises to the membrane. It carries out the reaction fumitremorgin C + 2 reduced [NADPH--hemoprotein reductase] + 2 O2 = 12alpha,13alpha-dihydroxyfumitremorgin C + 2 oxidized [NADPH--hemoprotein reductase] + 2 H2O + 2 H(+). It participates in mycotoxin biosynthesis. In terms of biological role, cytochrome P450 monooxygenase; part of the gene cluster that mediates the biosynthesis of fumitremorgins, indole alkaloids that carry not only intriguing chemical structures, but also interesting biological and pharmacological activities. The biosynthesis of fumitremorgin-type alkaloids begins by condensation of the two amino acids L-tryptophan and L-proline to brevianamide F, catalyzed by the non-ribosomal peptide synthetase ftmA. Brevianamide F is then prenylated by the prenyltransferase ftmPT1/ftmB in the presence of dimethylallyl diphosphate, resulting in the formation of tryprostatin B. The three cytochrome P450 monooxygenases, ftmP450-1/ftmC, ftmP450-2/ftmE and ftmP450-3/FtmG, are responsible for the conversion of tryprostatin B to 6-hydroxytryprostatin B, tryprostatin A to fumitremorgin C and fumitremorgin C to 12,13-dihydroxyfumitremorgin C, respectively. The putative methyltransferase ftmMT/ftmD is expected for the conversion of 6-hydroxytryprostatin B to tryprostatin A. FtmPT2/FtmH catalyzes the prenylation of 12,13-dihydroxyfumitre-morgin C in the presence of dimethylallyl diphosphate, resulting in the formation of fumitremorgin B. Fumitremorgin B is further converted to verruculogen by ftmOx1/ftmF via the insertion of an endoperoxide bond between the two prenyl moieties. In some fungal species, verruculogen is further converted to fumitremorgin A, but the enzymes involved in this step have not been identified yet. In Aspergillus fumigatus (Neosartorya fumigata), this protein is Fumitremorgin C monooxygenase.